Consider the following 64-residue polypeptide: uncharacterized protein (64 aa).

Residues valine 41–isoleucine 61 traverse the membrane as a helical segment.

The protein localises to the membrane. This is an uncharacterized protein from Acheta domesticus (House cricket).